We begin with the raw amino-acid sequence, 71 residues long: Vitellogenin-A1 (71 aa).

Residues 1 to 15 (MRGIILALLLAIAGS) form the signal peptide. The 48-residue stretch at 24 to 71 (FSESKTSVYNYEAVILNGFPESGLSRAGIKINCKVEISAYAQRSYFLK) folds into the Vitellogenin domain.

Produced by the liver, secreted into the blood and then sequestered by receptor mediated endocytosis into growing oocytes, where it is generally cleaved, giving rise to the respective yolk components.

Precursor of the major egg-yolk proteins that are sources of nutrients during early development of oviparous organisms. This chain is Vitellogenin-A1, found in Xenopus laevis (African clawed frog).